Reading from the N-terminus, the 394-residue chain is Phosphoglycerate kinase (394 aa).

Substrate contacts are provided by residues 21-23 (DFN), Arg-36, 59-62 (HLGR), Arg-118, and Arg-151. At Ser-183 the chain carries Phosphoserine. An ATP-binding site is contributed by Lys-201. Thr-299 bears the Phosphothreonine mark. Residues Glu-323 and 350–353 (GGDS) each bind ATP.

Belongs to the phosphoglycerate kinase family. In terms of assembly, monomer.

It localises to the cytoplasm. The catalysed reaction is (2R)-3-phosphoglycerate + ATP = (2R)-3-phospho-glyceroyl phosphate + ADP. It functions in the pathway carbohydrate degradation; glycolysis; pyruvate from D-glyceraldehyde 3-phosphate: step 2/5. The protein is Phosphoglycerate kinase of Shouchella clausii (strain KSM-K16) (Alkalihalobacillus clausii).